The following is a 182-amino-acid chain: Probable inosine/xanthosine triphosphatase (182 aa).

Positions 42 and 69 each coordinate Mg(2+).

It belongs to the YjjX NTPase family. In terms of assembly, homodimer. The cofactor is Mg(2+). It depends on Mn(2+) as a cofactor.

It carries out the reaction XTP + H2O = XDP + phosphate + H(+). It catalyses the reaction ITP + H2O = IDP + phosphate + H(+). Its function is as follows. Phosphatase that hydrolyzes non-canonical purine nucleotides such as XTP and ITP to their respective diphosphate derivatives. Probably excludes non-canonical purines from DNA/RNA precursor pool, thus preventing their incorporation into DNA/RNA and avoiding chromosomal lesions. This chain is Probable inosine/xanthosine triphosphatase, found in Methanothermobacter thermautotrophicus (strain ATCC 29096 / DSM 1053 / JCM 10044 / NBRC 100330 / Delta H) (Methanobacterium thermoautotrophicum).